Reading from the N-terminus, the 136-residue chain is UPF0299 membrane protein PM0880 (136 aa).

Helical transmembrane passes span 5–25 (IVDL…GEWI), 29–49 (LNIG…GLTF), 67–87 (YMAL…DVLF), and 92–112 (VLLL…GLLS).

The protein belongs to the UPF0299 family.

Its subcellular location is the cell inner membrane. This chain is UPF0299 membrane protein PM0880, found in Pasteurella multocida (strain Pm70).